We begin with the raw amino-acid sequence, 327 residues long: L-lactate dehydrogenase (327 aa).

NAD(+) is bound by residues Val-18, Asp-39, Arg-44, Tyr-69, and 83 to 84; that span reads GL. Substrate is bound by residues Gln-86, Arg-92, and 124 to 127; that span reads NPVD. NAD(+)-binding positions include 122 to 124 and Ser-147; that span reads AAN. 152–155 lines the substrate pocket; it reads DSAR. Positions 157 and 172 each coordinate beta-D-fructose 1,6-bisphosphate. His-179 acts as the Proton acceptor in catalysis. Tyr-224 is modified (phosphotyrosine). Thr-233 serves as a coordination point for substrate.

This sequence belongs to the LDH/MDH superfamily. LDH family. Homotetramer.

The protein localises to the cytoplasm. It catalyses the reaction (S)-lactate + NAD(+) = pyruvate + NADH + H(+). Its pathway is fermentation; pyruvate fermentation to lactate; (S)-lactate from pyruvate: step 1/1. With respect to regulation, allosterically activated by fructose 1,6-bisphosphate (FBP). In terms of biological role, catalyzes the conversion of lactate to pyruvate. The polypeptide is L-lactate dehydrogenase (Streptococcus suis (strain 98HAH33)).